Reading from the N-terminus, the 184-residue chain is Endoribonuclease YbeY (184 aa).

3 residues coordinate Zn(2+): histidine 151, histidine 155, and histidine 161.

It belongs to the endoribonuclease YbeY family. The cofactor is Zn(2+).

The protein resides in the cytoplasm. Single strand-specific metallo-endoribonuclease involved in late-stage 70S ribosome quality control and in maturation of the 3' terminus of the 16S rRNA. The protein is Endoribonuclease YbeY of Prochlorococcus marinus (strain NATL2A).